Consider the following 1190-residue polypeptide: Pyruvate-flavodoxin oxidoreductase (1190 aa).

4Fe-4S ferredoxin-type domains lie at 687-716 and 743-773; these read EIPV…SKVY and FTIQ…PRKK. [4Fe-4S] cluster-binding residues include Cys-696, Cys-699, Cys-702, Cys-706, Cys-752, Cys-755, Cys-758, Cys-762, Cys-826, Cys-829, Cys-854, and Cys-1089.

The protein belongs to the pyruvate:ferredoxin/flavodoxin oxidoreductase family. [4Fe-4S] cluster is required as a cofactor.

It catalyses the reaction oxidized [flavodoxin] + pyruvate + CoA + 2 H(+) = reduced [flavodoxin] + acetyl-CoA + CO2. Functionally, oxidoreductase required for the transfer of electrons from pyruvate to flavodoxin, which reduces nitrogenase. This chain is Pyruvate-flavodoxin oxidoreductase (nifJ), found in Trichormus variabilis (strain ATCC 29413 / PCC 7937) (Anabaena variabilis).